We begin with the raw amino-acid sequence, 257 residues long: 5'-nucleotidase SurE (257 aa).

Positions 13, 14, 44, and 100 each coordinate a divalent metal cation.

The protein belongs to the SurE nucleotidase family. A divalent metal cation serves as cofactor.

Its subcellular location is the cytoplasm. The enzyme catalyses a ribonucleoside 5'-phosphate + H2O = a ribonucleoside + phosphate. Functionally, nucleotidase that shows phosphatase activity on nucleoside 5'-monophosphates. This is 5'-nucleotidase SurE from Phocaeicola vulgatus (strain ATCC 8482 / DSM 1447 / JCM 5826 / CCUG 4940 / NBRC 14291 / NCTC 11154) (Bacteroides vulgatus).